The primary structure comprises 463 residues: Quinolone resistance protein NorB (463 aa).

Transmembrane regions (helical) follow at residues 19–39 (IVLS…VVLI), 53–73 (IAVS…GGLA), 86–106 (IILN…LLLI), 107–127 (IGRL…LSII), 142–162 (YWSI…GAVA), 165–185 (LGWR…LFLI), 201–221 (FDIK…ILIT), 230–250 (SLLF…FIVL), 273–293 (TASN…NTFV), 299–319 (YSLL…LIMI), 334–354 (PMLI…LTFL), 357–377 (ILYV…LGIY), 403–423 (MASA…YAIV), and 435–455 (IALW…LLLV).

The protein belongs to the major facilitator superfamily. TCR/Tet family.

It localises to the cell membrane. Functionally, multidrug efflux pump that acts independently of NorA and is one of the factors that confers resistance against diverse quinolones and chemical compounds. The sequence is that of Quinolone resistance protein NorB (norB) from Staphylococcus aureus (strain bovine RF122 / ET3-1).